We begin with the raw amino-acid sequence, 80 residues long: N-V protease (80 aa).

It belongs to the peptidase S8 family. As to quaternary structure, monomer. As to expression, body cavity.

The protein localises to the secreted. Its activity is regulated as follows. Inhibited by the serine protease inhibitors DFP, PMSF and TLCK. Not inhibited by the serine protease inhibitors aprotinin, elastinal, SBTI and benzamidine, the cysteine protease inhibitors iodoacetate and E64, or the metalloprotease inhibitors EDTA and EGTA. Its function is as follows. Serine protease. Hydrolyzes the alpha chains of fibrin and fibrinogen completely, has lower activity on the beta and gamma chains of fibrin and fibrinogen. This chain is N-V protease, found in Alitta virens (Sandworm).